Reading from the N-terminus, the 375-residue chain is tRNA(Met) cytidine acetate ligase (375 aa).

Residues valine 7–histidine 20, glycine 101, asparagine 151, and arginine 176 contribute to the ATP site.

Belongs to the TmcAL family.

It localises to the cytoplasm. The enzyme catalyses cytidine(34) in elongator tRNA(Met) + acetate + ATP = N(4)-acetylcytidine(34) in elongator tRNA(Met) + AMP + diphosphate. Functionally, catalyzes the formation of N(4)-acetylcytidine (ac(4)C) at the wobble position of elongator tRNA(Met), using acetate and ATP as substrates. First activates an acetate ion to form acetyladenylate (Ac-AMP) and then transfers the acetyl group to tRNA to form ac(4)C34. This chain is tRNA(Met) cytidine acetate ligase, found in Limosilactobacillus fermentum (strain NBRC 3956 / LMG 18251) (Lactobacillus fermentum).